We begin with the raw amino-acid sequence, 483 residues long: Scarecrow-like protein 26 (483 aa).

One can recognise a GRAS domain in the interval 95-477 (KTDESKGLRL…RRLVSASFWA (383 aa)). The interval 102–165 (LRLVHLLVAA…SKLLERDSVL (64 aa)) is leucine repeat I (LRI). The interval 184 to 251 (FELLQNMSPY…PSAQHLRITA (68 aa)) is VHIID. The VHIID signature appears at 215 to 219 (IHIVD). Residues 267–299 (ETGRRLTAFADSIGQPFSYQHCKLDTNAFSTSS) are leucine repeat II (LRII). Positions 308 to 400 (VVINCMLHLP…RVFIGPWVAN (93 aa)) are PFYRE. The interval 403-477 (TRITANDAEV…RRLVSASFWA (75 aa)) is SAW.

Belongs to the GRAS family. Expressed in seedlings, roots, leaves and flowers.

Its subcellular location is the nucleus. Functionally, probable transcription factor involved in plant development. The polypeptide is Scarecrow-like protein 26 (SCL26) (Arabidopsis thaliana (Mouse-ear cress)).